Consider the following 203-residue polypeptide: dTTP/UTP pyrophosphatase (203 aa).

The active-site Proton acceptor is D74.

Belongs to the Maf family. YhdE subfamily. Requires a divalent metal cation as cofactor.

It is found in the cytoplasm. It carries out the reaction dTTP + H2O = dTMP + diphosphate + H(+). The enzyme catalyses UTP + H2O = UMP + diphosphate + H(+). Functionally, nucleoside triphosphate pyrophosphatase that hydrolyzes dTTP and UTP. May have a dual role in cell division arrest and in preventing the incorporation of modified nucleotides into cellular nucleic acids. The protein is dTTP/UTP pyrophosphatase of Treponema denticola (strain ATCC 35405 / DSM 14222 / CIP 103919 / JCM 8153 / KCTC 15104).